The following is a 418-amino-acid chain: Gamma-glutamyl phosphate reductase (418 aa).

It belongs to the gamma-glutamyl phosphate reductase family.

It localises to the cytoplasm. It catalyses the reaction L-glutamate 5-semialdehyde + phosphate + NADP(+) = L-glutamyl 5-phosphate + NADPH + H(+). It participates in amino-acid biosynthesis; L-proline biosynthesis; L-glutamate 5-semialdehyde from L-glutamate: step 2/2. In terms of biological role, catalyzes the NADPH-dependent reduction of L-glutamate 5-phosphate into L-glutamate 5-semialdehyde and phosphate. The product spontaneously undergoes cyclization to form 1-pyrroline-5-carboxylate. This Thermodesulfovibrio yellowstonii (strain ATCC 51303 / DSM 11347 / YP87) protein is Gamma-glutamyl phosphate reductase.